The primary structure comprises 284 residues: Protein G1-like9 (284 aa).

A disordered region spans residues Met1–Glu69. Composition is skewed to low complexity over residues Ala13–Ser32 and Gln40–Ala63. The region spanning Arg67–Arg194 is the ALOG domain. Residues Lys192–Arg196 carry the Nuclear localization signal motif. The disordered stretch occupies residues Val209–Ser284. Over residues Thr246–Ser284 the composition is skewed to low complexity.

This sequence belongs to the plant homeotic and developmental regulators ALOG protein family.

Its subcellular location is the nucleus. In terms of biological role, probable transcription regulator that acts as a developmental regulator by promoting cell growth in response to light. The polypeptide is Protein G1-like9 (Oryza sativa subsp. indica (Rice)).